A 532-amino-acid polypeptide reads, in one-letter code: ATP synthase subunit alpha (532 aa).

Residue 171–178 (GDRQTGKT) coordinates ATP.

Belongs to the ATPase alpha/beta chains family. F-type ATPases have 2 components, CF(1) - the catalytic core - and CF(0) - the membrane proton channel. CF(1) has five subunits: alpha(3), beta(3), gamma(1), delta(1), epsilon(1). CF(0) has three main subunits: a(1), b(2) and c(9-12). The alpha and beta chains form an alternating ring which encloses part of the gamma chain. CF(1) is attached to CF(0) by a central stalk formed by the gamma and epsilon chains, while a peripheral stalk is formed by the delta and b chains.

The protein localises to the cell membrane. It catalyses the reaction ATP + H2O + 4 H(+)(in) = ADP + phosphate + 5 H(+)(out). In terms of biological role, produces ATP from ADP in the presence of a proton gradient across the membrane. The alpha chain is a regulatory subunit. This is ATP synthase subunit alpha from Amoebophilus asiaticus (strain 5a2).